A 278-amino-acid polypeptide reads, in one-letter code: Dermonecrotic toxin LspiSicTox-betaIE2iii (278 aa).

His5 is an active-site residue. The Mg(2+) site is built by Glu25 and Asp27. Residue His41 is the Nucleophile of the active site. Intrachain disulfides connect Cys45–Cys51 and Cys47–Cys190. Residue Asp85 participates in Mg(2+) binding.

This sequence belongs to the arthropod phospholipase D family. Class II subfamily. Mg(2+) serves as cofactor. In terms of tissue distribution, expressed by the venom gland.

The protein localises to the secreted. The catalysed reaction is an N-(acyl)-sphingosylphosphocholine = an N-(acyl)-sphingosyl-1,3-cyclic phosphate + choline. It catalyses the reaction an N-(acyl)-sphingosylphosphoethanolamine = an N-(acyl)-sphingosyl-1,3-cyclic phosphate + ethanolamine. It carries out the reaction a 1-acyl-sn-glycero-3-phosphocholine = a 1-acyl-sn-glycero-2,3-cyclic phosphate + choline. The enzyme catalyses a 1-acyl-sn-glycero-3-phosphoethanolamine = a 1-acyl-sn-glycero-2,3-cyclic phosphate + ethanolamine. Functionally, dermonecrotic toxins cleave the phosphodiester linkage between the phosphate and headgroup of certain phospholipids (sphingolipid and lysolipid substrates), forming an alcohol (often choline) and a cyclic phosphate. This toxin acts on sphingomyelin (SM). It may also act on ceramide phosphoethanolamine (CPE), lysophosphatidylcholine (LPC) and lysophosphatidylethanolamine (LPE), but not on lysophosphatidylserine (LPS), and lysophosphatidylglycerol (LPG). It acts by transphosphatidylation, releasing exclusively cyclic phosphate products as second products. Induces dermonecrosis, hemolysis, increased vascular permeability, edema, inflammatory response, and platelet aggregation. The polypeptide is Dermonecrotic toxin LspiSicTox-betaIE2iii (Loxosceles spinulosa (Recluse spider)).